A 567-amino-acid polypeptide reads, in one-letter code: MLLAQINRDSQAMAEFPGGGGEAQHVTLCLTEAVADGESMDTMEGMSLQAVTLADGSTAYIQHNTKDGKLMEGQVIQLEDGSAAYVQHVPKGDDLSLEDGQAVQLEDGTTAYIHHSSKDSYDQSSVQAVQLEDGTTAYIHHAVQVPQSDTILAIQADGTVAGLHTGEASIDPDTISALEQYAAKVSIEGGEGAGSNALINESESEKKMQIVLSHGSRIPAKPPQTNEKAFRCDYEGCGKLYTTAHHLKVHERSHTGDRPYQCDHGGCRKAFATGYGLKSHVRTHTGEKPYRCSEENCTKSFKTSGDLQKHVRTHTGERPFKCPFEGCGRSFTTSNIRKVHIRTHTGERPYYCSEPGCGRAFASATNYKNHVRIHTGEKPYVCTVPGCDKRFTEYSSLYKHHVVHTHSKPYNCNHCGKTYKQISTLAMHKRTAHNDTEPIEEEQESFFVPQPPDEVIKGSQITYVTGVDGEDGIQTTQSGQQLALIAQDGTSHVAIVAQDLSAFHTSATESGPQHSHNLGGSESRPVTLLATSNGRQIAVQIGEQQSLEEAIRIASRIQQGESPGIED.

7 C2H2-type zinc fingers span residues 230 to 254 (FRCD…ERSH), 260 to 284 (YQCD…VRTH), 290 to 314 (YRCS…VRTH), 320 to 344 (FKCP…IRTH), 350 to 374 (YYCS…VRIH), 380 to 404 (YVCT…HVVH), and 410 to 433 (YNCN…RTAH). Over residues 506 to 520 (SATESGPQHSHNLGG) the composition is skewed to polar residues. The tract at residues 506 to 525 (SATESGPQHSHNLGGSESRP) is disordered.

It belongs to the GLI C2H2-type zinc-finger protein family.

The protein resides in the nucleus. In terms of biological role, transcriptional activator. Activates the gene for selenocysteine tRNA (tRNAsec). Binds to the activator element (AE) motif of the selenocysteine tRNA gene promoter. The polypeptide is Zinc finger protein 143 (znf143) (Xenopus tropicalis (Western clawed frog)).